The primary structure comprises 352 residues: UDP-N-acetylglucosamine--N-acetylmuramyl-(pentapeptide) pyrophosphoryl-undecaprenol N-acetylglucosamine transferase (352 aa).

The UDP-N-acetyl-alpha-D-glucosamine site is built by Ser-195 and Gln-287.

Belongs to the glycosyltransferase 28 family. MurG subfamily.

The protein resides in the cell membrane. The catalysed reaction is Mur2Ac(oyl-L-Ala-gamma-D-Glu-L-Lys-D-Ala-D-Ala)-di-trans,octa-cis-undecaprenyl diphosphate + UDP-N-acetyl-alpha-D-glucosamine = beta-D-GlcNAc-(1-&gt;4)-Mur2Ac(oyl-L-Ala-gamma-D-Glu-L-Lys-D-Ala-D-Ala)-di-trans,octa-cis-undecaprenyl diphosphate + UDP + H(+). It functions in the pathway cell wall biogenesis; peptidoglycan biosynthesis. Functionally, cell wall formation. Catalyzes the transfer of a GlcNAc subunit on undecaprenyl-pyrophosphoryl-MurNAc-pentapeptide (lipid intermediate I) to form undecaprenyl-pyrophosphoryl-MurNAc-(pentapeptide)GlcNAc (lipid intermediate II). In Streptococcus pneumoniae serotype 19F (strain G54), this protein is UDP-N-acetylglucosamine--N-acetylmuramyl-(pentapeptide) pyrophosphoryl-undecaprenol N-acetylglucosamine transferase.